Here is a 363-residue protein sequence, read N- to C-terminus: Ly6/PLAUR domain-containing protein 3 (363 aa).

A signal peptide spans 1-32; that stretch reads MDAARRGDTQPVMWTTGWLLLLPLLLCEGAQA. In terms of domain architecture, UPAR/Ly6 1 spans 35–128; the sequence is CYSCVQKADD…LNLTLRGLNP (94 aa). N120, N131, N178, and N185 each carry an N-linked (GlcNAc...) asparagine glycan. Residues 142-224 form the UPAR/Ly6 2 domain; it reads CYSCVGLSRE…GSCCQGPRCN (83 aa). The segment covering 238 to 248 has biased composition (pro residues); it reads PPLVLLPPPTT. 2 disordered regions span residues 238–287 and 301–336; these read PPLV…TSPH and LSGG…GGAQ. Residues 249 to 278 show a composition bias toward low complexity; it reads AAPSTRAQNSSSTTSTAAPTTTTSIIKPTT. Positions 304–318 are enriched in gly residues; it reads GAAGHGGTAGHGGAA. The segment covering 320 to 330 has biased composition (basic and acidic residues); that stretch reads HQDRSNMEKYP. The GPI-anchor amidated serine moiety is linked to residue S343. The propeptide at 344–363 is removed in mature form; that stretch reads GTLGSWLSAVLLTVVAGAML.

Binds laminin-1 and laminin-5. Interacts with LGALS3. Interacts with AGR2 and AGR3.

The protein resides in the cell membrane. Its function is as follows. Supports cell migration. May be involved in tumor progression. This Mus musculus (Mouse) protein is Ly6/PLAUR domain-containing protein 3 (Lypd3).